The following is a 236-amino-acid chain: MTTQELNVDSAEIAKFERLAARWWDLEGEFKPLHDLNPLRANYIDERAQVAEKKLLDVGCGGGILCEAMAQRGAIVTGIDMGDAPLEVAKLHSLESGVNVDYIKTTAEEFAAKHPQSYDVVTCLEMLEHVPDPAQTIAACAQLVKPGGDIFFSTINRNPKAYLFAVVGAEYVLKMLPKGTHDYNKFIRPSELAQWMRNAGLELQEMCGMTYNPITKHYKLNAKDVSVNYIMHARKI.

Residues R40, G59, D80, and L124 each contribute to the S-adenosyl-L-methionine site.

Belongs to the methyltransferase superfamily. UbiG/COQ3 family.

It carries out the reaction a 3-demethylubiquinol + S-adenosyl-L-methionine = a ubiquinol + S-adenosyl-L-homocysteine + H(+). It catalyses the reaction a 3-(all-trans-polyprenyl)benzene-1,2-diol + S-adenosyl-L-methionine = a 2-methoxy-6-(all-trans-polyprenyl)phenol + S-adenosyl-L-homocysteine + H(+). It functions in the pathway cofactor biosynthesis; ubiquinone biosynthesis. Functionally, O-methyltransferase that catalyzes the 2 O-methylation steps in the ubiquinone biosynthetic pathway. The chain is Ubiquinone biosynthesis O-methyltransferase from Saccharophagus degradans (strain 2-40 / ATCC 43961 / DSM 17024).